We begin with the raw amino-acid sequence, 258 residues long: Rho-related GTP-binding protein RhoU (258 aa).

The disordered stretch occupies residues 1–45; that stretch reads MPPQQGDPAFPDRCEAPPVPPRRERGGRGGRGPGEPGGRGRAGGA. The segment covering 10–27 has biased composition (basic and acidic residues); it reads FPDRCEAPPVPPRRERGG. Residues 29 to 45 are compositionally biased toward gly residues; it reads GGRGPGEPGGRGRAGGA. Residues 56–63, 103–107, and 161–164 contribute to the GTP site; these read GDGAVGKT, DTAGQ, and TQSD. Glycyl lysine isopeptide (Lys-Gly) (interchain with G-Cter in ubiquitin) cross-links involve residues Lys-177 and Lys-248. Cys-256 carries S-palmitoyl cysteine lipidation.

Belongs to the small GTPase superfamily. Rho family. As to quaternary structure, interacts with PAK1. Interacts with PAK3. Interacts with ARHGAP30 in a GTP-independent manner. In its GTP-loaded conformation, interacts with ARHGAP31. Interacts with PTK2B/PYK2. Interacts with PAK4; the interaction is PAK4 kinase activity-independent and protects RHOU from ubiquitination. Mg(2+) is required as a cofactor. Ubiquitinated. 'Lys-48'-linked ubiquitination at Lys-177 and Lys-248 by the ECS(RAB40A) complex leading to its degradation. In terms of processing, tyrosine phosphorylated by SRC in response to PTK2B/PYK2 activation. In terms of tissue distribution, ubiquitously expressed in all tissues examined. Expressed at high levels in the stomach, small intestine, brain, skeletal muscle and placenta.

It localises to the cell membrane. The protein resides in the golgi apparatus membrane. The protein localises to the cell junction. It is found in the focal adhesion. Its subcellular location is the cell projection. It localises to the podosome. In terms of biological role, binds to and activates protein kinase PAK1. Plays a role in the regulation of cell morphology, cytoskeletal organization and focal adhesion assembly during cell migration. Also stimulates quiescent cells to reenter the cell cycle. Has no detectable GTPase activity but its high intrinsic guanine nucleotide exchange activity suggests it is constitutively GTP-bound. The protein is Rho-related GTP-binding protein RhoU of Homo sapiens (Human).